The following is a 413-amino-acid chain: Probable protein S-acyltransferase 3 (413 aa).

2 helical membrane-spanning segments follow: residues 65–85 and 96–116; these read LTSF…LVWI and VLAS…LTSA. Positions 171–221 constitute a DHHC domain; the sequence is KFCDTCLLYRPPRASHCSICNNCVQRFDHHCPWVGQCIARRNYPFFICFIS. Catalysis depends on Cys201, which acts as the S-palmitoyl cysteine intermediate. 2 helical membrane-spanning segments follow: residues 216–236 and 255–275; these read FICF…FSWI and SVIL…LTIF. The interval 364–413 is disordered; sequence RDSPRKLPLPTRNLDDIKDISDNYDRSTTTREDASDRDPSFFSSQLDLPK. Basic and acidic residues predominate over residues 376–402; that stretch reads NLDDIKDISDNYDRSTTTREDASDRDP. A compositionally biased stretch (polar residues) spans 404–413; it reads FFSSQLDLPK.

The protein belongs to the DHHC palmitoyltransferase family. In terms of tissue distribution, expressed in flowers and pollen.

The protein resides in the endoplasmic reticulum membrane. It is found in the cytoplasmic vesicle membrane. It carries out the reaction L-cysteinyl-[protein] + hexadecanoyl-CoA = S-hexadecanoyl-L-cysteinyl-[protein] + CoA. Its function is as follows. Palmitoyl acyltransferase. This chain is Probable protein S-acyltransferase 3 (PAT03), found in Arabidopsis thaliana (Mouse-ear cress).